Here is a 150-residue protein sequence, read N- to C-terminus: C-type lectin mosGCTL-7 (150 aa).

Positions 1 to 17 (MQLVHVLVVLLSVVAHA) are cleaved as a signal peptide. Residues 18 to 140 (KKFFIPNLKA…CRGFKAYIVC (123 aa)) form the C-type lectin domain. Asparagine 67 carries N-linked (GlcNAc...) asparagine glycosylation. A disulfide bridge links cysteine 111 with cysteine 131.

As to quaternary structure, interacts with putative receptor-type tyrosine-protein phosphatase mosPTP-1; the interaction probably mediates the recruitment of Japanese encephalitis virus particles in complex with C-type lectin mosGCTL-7 to the cell surface. In terms of assembly, (Microbial infection) Interacts with envelope protein E (glycosylated) of Japanese encephalitis virus in a calcium-dependent manner.

Its subcellular location is the secreted. In terms of biological role, carbohydrate-binding protein. Functionally, (Microbial infection) Facilitates Japanese encephalitis virus infection in mosquitoes probably via capturing viral particles and presenting them to a ligand on the cell surface, thereby facilitating viral entry. The sequence is that of C-type lectin mosGCTL-7 from Aedes aegypti (Yellowfever mosquito).